Here is a 148-residue protein sequence, read N- to C-terminus: MIDKKELREISLKKKREKRLTWEEIGKYLGRDKVYAAMLLYGYAQATEEEADKIITLLDLPKELKPAFLDAPMRTPAQPWPPTDPFIYRLYEGVLLYGPVIKDVAHELFGDGIMSMIDVKIYVDKVIENNYPRMVLTFNGKWLYYSKW.

Catalysis depends on residues R89, E92, and S115.

The protein belongs to the cyanase family.

The catalysed reaction is cyanate + hydrogencarbonate + 3 H(+) = NH4(+) + 2 CO2. Catalyzes the reaction of cyanate with bicarbonate to produce ammonia and carbon dioxide. This Sulfurisphaera tokodaii (strain DSM 16993 / JCM 10545 / NBRC 100140 / 7) (Sulfolobus tokodaii) protein is Cyanate hydratase.